Consider the following 441-residue polypeptide: GTPase Der (441 aa).

EngA-type G domains are found at residues glutamine 2–glutamate 164 and isoleucine 173–glutamine 343. GTP-binding positions include glycine 8–serine 15, aspartate 55–leucine 59, asparagine 116–aspartate 119, glycine 179–serine 186, aspartate 226–isoleucine 230, and asparagine 288–aspartate 291. Residues serine 344–glycine 428 form the KH-like domain.

The protein belongs to the TRAFAC class TrmE-Era-EngA-EngB-Septin-like GTPase superfamily. EngA (Der) GTPase family. In terms of assembly, associates with the 50S ribosomal subunit.

Its function is as follows. GTPase that plays an essential role in the late steps of ribosome biogenesis. This Deinococcus geothermalis (strain DSM 11300 / CIP 105573 / AG-3a) protein is GTPase Der.